The following is a 134-amino-acid chain: Small ribosomal subunit protein bS6 (134 aa).

Residues 113 to 122 (NRDIKEKEQP) are compositionally biased toward basic and acidic residues. The disordered stretch occupies residues 113-134 (NRDIKEKEQPSESNVDADLKVN).

This sequence belongs to the bacterial ribosomal protein bS6 family.

Binds together with bS18 to 16S ribosomal RNA. In Borrelia duttonii (strain Ly), this protein is Small ribosomal subunit protein bS6.